A 115-amino-acid polypeptide reads, in one-letter code: NADH-ubiquinone oxidoreductase chain 3 (115 aa).

3 consecutive transmembrane segments (helical) span residues 3 to 23, 55 to 75, and 86 to 106; these read LMATLLTNTMLTSLMVLIAFW, FFLVAITFLLFDLEIALLLPL, and LTLLMSFMLIILLAIGLAYEW.

The protein belongs to the complex I subunit 3 family. Core subunit of respiratory chain NADH dehydrogenase (Complex I) which is composed of 45 different subunits. Interacts with TMEM186. Interacts with TMEM242.

It localises to the mitochondrion inner membrane. It catalyses the reaction a ubiquinone + NADH + 5 H(+)(in) = a ubiquinol + NAD(+) + 4 H(+)(out). Its function is as follows. Core subunit of the mitochondrial membrane respiratory chain NADH dehydrogenase (Complex I) which catalyzes electron transfer from NADH through the respiratory chain, using ubiquinone as an electron acceptor. Essential for the catalytic activity of complex I. The protein is NADH-ubiquinone oxidoreductase chain 3 of Mammuthus primigenius (Siberian woolly mammoth).